The chain runs to 187 residues: Elongation factor P 1 (187 aa).

Belongs to the elongation factor P family.

The protein resides in the cytoplasm. Its pathway is protein biosynthesis; polypeptide chain elongation. Involved in peptide bond synthesis. Stimulates efficient translation and peptide-bond synthesis on native or reconstituted 70S ribosomes in vitro. Probably functions indirectly by altering the affinity of the ribosome for aminoacyl-tRNA, thus increasing their reactivity as acceptors for peptidyl transferase. The chain is Elongation factor P 1 from Geobacter sulfurreducens (strain ATCC 51573 / DSM 12127 / PCA).